Reading from the N-terminus, the 222-residue chain is Ribonuclease T (222 aa).

One can recognise an Exonuclease domain in the interval 20 to 194 (VVIDVETAGF…YDTERTAELF (175 aa)). Mg(2+) contacts are provided by aspartate 23, glutamate 25, histidine 181, and aspartate 186. Catalysis depends on histidine 181, which acts as the Proton donor/acceptor.

The protein belongs to the RNase T family. As to quaternary structure, homodimer. Mg(2+) is required as a cofactor.

Trims short 3' overhangs of a variety of RNA species, leaving a one or two nucleotide 3' overhang. Responsible for the end-turnover of tRNA: specifically removes the terminal AMP residue from uncharged tRNA (tRNA-C-C-A). Also appears to be involved in tRNA biosynthesis. This chain is Ribonuclease T, found in Shewanella sp. (strain ANA-3).